A 427-amino-acid chain; its full sequence is Histidinol dehydrogenase (427 aa).

Substrate is bound by residues serine 232, glutamine 254, and histidine 257. Residues glutamine 254 and histidine 257 each contribute to the Zn(2+) site. Catalysis depends on proton acceptor residues glutamate 322 and histidine 323. Residues histidine 323, aspartate 356, glutamate 410, and histidine 415 each coordinate substrate. Aspartate 356 provides a ligand contact to Zn(2+). Zn(2+) is bound at residue histidine 415.

It belongs to the histidinol dehydrogenase family. The cofactor is Zn(2+).

The catalysed reaction is L-histidinol + 2 NAD(+) + H2O = L-histidine + 2 NADH + 3 H(+). It functions in the pathway amino-acid biosynthesis; L-histidine biosynthesis; L-histidine from 5-phospho-alpha-D-ribose 1-diphosphate: step 9/9. Catalyzes the sequential NAD-dependent oxidations of L-histidinol to L-histidinaldehyde and then to L-histidine. In Listeria innocua serovar 6a (strain ATCC BAA-680 / CLIP 11262), this protein is Histidinol dehydrogenase.